A 213-amino-acid chain; its full sequence is ATP phosphoribosyltransferase (213 aa).

This sequence belongs to the ATP phosphoribosyltransferase family. Short subfamily. Heteromultimer composed of HisG and HisZ subunits.

Its subcellular location is the cytoplasm. It carries out the reaction 1-(5-phospho-beta-D-ribosyl)-ATP + diphosphate = 5-phospho-alpha-D-ribose 1-diphosphate + ATP. It participates in amino-acid biosynthesis; L-histidine biosynthesis; L-histidine from 5-phospho-alpha-D-ribose 1-diphosphate: step 1/9. Catalyzes the condensation of ATP and 5-phosphoribose 1-diphosphate to form N'-(5'-phosphoribosyl)-ATP (PR-ATP). Has a crucial role in the pathway because the rate of histidine biosynthesis seems to be controlled primarily by regulation of HisG enzymatic activity. The chain is ATP phosphoribosyltransferase from Saccharophagus degradans (strain 2-40 / ATCC 43961 / DSM 17024).